A 168-amino-acid polypeptide reads, in one-letter code: Phosphopantetheine adenylyltransferase (168 aa).

Thr-13 is a binding site for substrate. ATP-binding positions include 13-14 (TF) and His-21. Substrate-binding residues include Lys-45, Leu-78, and Arg-92. ATP contacts are provided by residues 93–95 (GLR), Glu-103, and 128–134 (TQFISSS).

Belongs to the bacterial CoaD family. As to quaternary structure, homohexamer. Mg(2+) serves as cofactor.

Its subcellular location is the cytoplasm. It carries out the reaction (R)-4'-phosphopantetheine + ATP + H(+) = 3'-dephospho-CoA + diphosphate. The protein operates within cofactor biosynthesis; coenzyme A biosynthesis; CoA from (R)-pantothenate: step 4/5. Reversibly transfers an adenylyl group from ATP to 4'-phosphopantetheine, yielding dephospho-CoA (dPCoA) and pyrophosphate. In Wolbachia pipientis subsp. Culex pipiens (strain wPip), this protein is Phosphopantetheine adenylyltransferase.